Here is a 110-residue protein sequence, read N- to C-terminus: Protein RnfH (110 aa).

A disordered region spans residues 90-110 (VDKTRREGSIEGRKWLPKDSR).

Belongs to the UPF0125 (RnfH) family.

This is Protein RnfH from Burkholderia mallei (strain NCTC 10229).